Consider the following 88-residue polypeptide: MLEGAKSIGAGAATIASAGAAIGIGNVFSSLIHSVARNPSLAKQLFGYAILGFALSELIALFALMMAFLILFAFRFFSKKGKLAGAPV.

2 helical membrane-spanning segments follow: residues 8-28 (IGAG…GNVF) and 45-72 (LFGY…LILF).

It belongs to the ATPase C chain family. As to quaternary structure, F-type ATPases have 2 components, CF(1) - the catalytic core - and CF(0) - the membrane proton channel. CF(1) has five subunits: alpha(3), beta(3), gamma(1), delta(1), epsilon(1). CF(0) has three main subunits: a, b and c.

It localises to the mitochondrion membrane. The enzyme catalyses ATP + H2O + 4 H(+)(in) = ADP + phosphate + 5 H(+)(out). This protein is one of the chains of the nonenzymatic membrane component (F0) of mitochondrial ATPase. The chain is ATP synthase subunit 9, mitochondrial (ATP9) from Beta vulgaris (Sugar beet).